Reading from the N-terminus, the 100-residue chain is Toxin Rv0299 (100 aa).

In terms of biological role, toxic component of a type II toxin-antitoxin (TA) system. Upon expression in M.smegmatis inhibits colony formation. Its toxic effect is neutralized by coexpression with cognate antitoxin Rv0298/MT0312. The chain is Toxin Rv0299 from Mycobacterium tuberculosis (strain ATCC 25618 / H37Rv).